The following is a 231-amino-acid chain: uncharacterized protein (231 aa).

10–34 contacts NADP(+); sequence VVTGAGSGIGEAIATLLHEEGAKVV. Residue serine 140 coordinates substrate. Catalysis depends on tyrosine 153, which acts as the Proton acceptor.

This sequence belongs to the short-chain dehydrogenases/reductases (SDR) family.

This is an uncharacterized protein from Staphylococcus aureus (strain N315).